A 907-amino-acid chain; its full sequence is DNA mismatch repair protein MutS (907 aa).

Position 656-663 (G656–S663) interacts with ATP.

This sequence belongs to the DNA mismatch repair MutS family.

In terms of biological role, this protein is involved in the repair of mismatches in DNA. It is possible that it carries out the mismatch recognition step. This protein has a weak ATPase activity. The protein is DNA mismatch repair protein MutS of Nitrobacter hamburgensis (strain DSM 10229 / NCIMB 13809 / X14).